We begin with the raw amino-acid sequence, 101 residues long: Small ribosomal subunit protein uS14 (101 aa).

Belongs to the universal ribosomal protein uS14 family. In terms of assembly, part of the 30S ribosomal subunit. Contacts proteins S3 and S10.

Functionally, binds 16S rRNA, required for the assembly of 30S particles and may also be responsible for determining the conformation of the 16S rRNA at the A site. In Ruegeria sp. (strain TM1040) (Silicibacter sp.), this protein is Small ribosomal subunit protein uS14.